The chain runs to 170 residues: Glycine cleavage system H protein, mitochondrial (170 aa).

A mitochondrion-targeting transit peptide spans 1–45 (MSLRVVRSVRAVACSLRIALASCPPRPWAPSAAAVRSLRTGSALL). Positions 63 to 145 (IGTVGISNFA…YEDGWLIKMT (83 aa)) constitute a Lipoyl-binding domain. Residue Lys104 is modified to N6-lipoyllysine.

This sequence belongs to the GcvH family. In terms of assembly, the glycine cleavage system is composed of four proteins: P (GLDC), T (GCST), L (DLD) and H (GCSH). Interacts with GLDC. It depends on (R)-lipoate as a cofactor.

Its subcellular location is the mitochondrion. The glycine cleavage system catalyzes the degradation of glycine. The H protein (GCSH) shuttles the methylamine group of glycine from the P protein (GLDC) to the T protein (GCST). Has a pivotal role in the lipoylation of enzymes involved in cellular energetics such as the mitochondrial dihydrolipoyllysine-residue acetyltransferase component of pyruvate dehydrogenase complex (DLAT), and the mitochondrial dihydrolipoyllysine-residue succinyltransferase component of 2-oxoglutarate dehydrogenase complex (DLST). The protein is Glycine cleavage system H protein, mitochondrial of Rattus norvegicus (Rat).